Reading from the N-terminus, the 952-residue chain is Lysosomal alpha-glucosidase (952 aa).

The N-terminal stretch at 1 to 27 (MGVRHPPCSHRLLAVCALVSLATAALL) is a signal peptide. A propeptide spanning residues 28–69 (GHILLHDFLLVPRELSGSSPVLEETHPAHQQGASRPGPRDAQ) is cleaved from the precursor. Positions 47 to 82 (PVLEETHPAHQQGASRPGPRDAQAHPGRPRAVPTQC) are disordered. Residues 80-131 (TQCDVPPNSRFDCAPDKAITQEQCEARGCCYIPAKQGLQGAQMGQPWCFFPP) form the P-type domain. Disulfide bonds link C82–C109, C92–C108, and C103–C127. N-linked (GlcNAc...) asparagine glycosylation is found at N140, N233, and N390. D404 is a substrate binding site. A glycan (N-linked (GlcNAc...) asparagine) is linked at N470. Catalysis depends on D518, which acts as the Nucleophile. E521 is an active-site residue. The cysteines at positions 533 and 558 are disulfide-linked. Substrate-binding residues include R600 and D616. Cysteines 647 and 658 form a disulfide. Residue N652 is glycosylated (N-linked (GlcNAc...) asparagine). A substrate-binding site is contributed by H674. N882 and N925 each carry an N-linked (GlcNAc...) asparagine glycan.

It belongs to the glycosyl hydrolase 31 family. Post-translationally, the different forms of acid glucosidase are obtained by proteolytic processing. Phosphorylation of mannose residues ensures efficient transport of the enzyme to the lysosomes via the mannose 6-phosphate receptor.

It is found in the lysosome. It localises to the lysosome membrane. It carries out the reaction Hydrolysis of terminal, non-reducing (1-&gt;4)-linked alpha-D-glucose residues with release of alpha-D-glucose.. Functionally, essential for the degradation of glycogen in lysosomes. Has highest activity on alpha-1,4-linked glycosidic linkages, but can also hydrolyze alpha-1,6-linked glucans. This chain is Lysosomal alpha-glucosidase (GAA), found in Homo sapiens (Human).